A 154-amino-acid chain; its full sequence is Protein X (154 aa).

A mitochondrial targeting sequence region spans residues 68-117; that stretch reads PCALRFTSARCMETTVNAHQILPKVLHKRTLGLPAMSTTDLEAYFKDCVF.

The protein belongs to the orthohepadnavirus protein X family. In terms of assembly, may form homodimer. May interact with host CEBPA, CFLAR, CREB1, DDB1, E4F1, HBXIP, HSPD1/HSP60, NFKBIA, POLR2E and SMAD4. Interacts with host SMC5-SMC6 complex and induces its degradation. Interacts with host TRPC4AP; leading to prevent ubiquitination of TRPC4AP. Interacts with host PLSCR1; this interaction promotes ubiquitination and degradation of HBx and impairs HBx-mediated cell proliferation. Post-translationally, a fraction may be phosphorylated in insect cells and HepG2 cells, a human hepatoblastoma cell line. Phosphorylated in vitro by host protein kinase C or mitogen-activated protein kinase. N-acetylated in insect cells.

The protein resides in the host cytoplasm. The protein localises to the host nucleus. Its subcellular location is the host mitochondrion. In terms of biological role, multifunctional protein that plays a role in silencing host antiviral defenses and promoting viral transcription. Does not seem to be essential for HBV infection. May be directly involved in development of cirrhosis and liver cancer (hepatocellular carcinoma). Most of cytosolic activities involve modulation of cytosolic calcium. The effect on apoptosis is controversial depending on the cell types in which the studies have been conducted. May induce apoptosis by localizing in mitochondria and causing loss of mitochondrial membrane potential. May also modulate apoptosis by binding host CFLAR, a key regulator of the death-inducing signaling complex (DISC). Promotes viral transcription by using the host E3 ubiquitin ligase DDB1 to target the SMC5-SMC6 complex to proteasomal degradation. This host complex would otherwise bind to viral episomal DNA, and prevents its transcription. Moderately stimulates transcription of many different viral and cellular transcription elements. Promoters and enhancers stimulated by HBx contain DNA binding sites for NF-kappa-B, AP-1, AP-2, c-EBP, ATF/CREB, or the calcium-activated factor NF-AT. The sequence is that of Protein X from Homo sapiens (Human).